The sequence spans 153 residues: UPAR/Ly6 domain-containing protein cold (153 aa).

The signal sequence occupies residues Met-1–Gly-25. Residues Leu-26–Gln-130 lie on the Extracellular side of the membrane. Cystine bridges form between Cys-28-Cys-55, Cys-31-Cys-41, Cys-48-Cys-81, Cys-87-Cys-112, Cys-99-Cys-109, and Cys-113-Cys-118. A glycan (N-linked (GlcNAc...) asparagine) is linked at Asn-33. Ser-124 carries the GPI-anchor amidated serine lipid modification. A propeptide spans Gly-125–Ser-153 (removed in mature form). A helical transmembrane segment spans residues Gly-131–Pro-151. The Cytoplasmic portion of the chain corresponds to Arg-152 to Ser-153.

This sequence belongs to the snake toxin-like superfamily. Post-translationally, GPI-anchored. As to expression, expressed in all tissues that form septate junctions, including hindgut, trachea, epidermis and dorsal pouch. Expressed in subperineurial glial cells that form the hemolymph-brain barrier of the central nervous system.

It localises to the endosome membrane. The protein localises to the endoplasmic reticulum membrane. It is found in the cell membrane. The protein resides in the cell junction. Its subcellular location is the septate junction. Functionally, required for septate junction assembly, possibly by organizing the preassembly and transport of septate junction proteins such as dlg1/disks large 1 and Nrx-IV/Neurexin-IV. Involved in paracellular barrier functions of trachea, hindgut and salivary gland mediated by epithelial cell septate junctions. Involved in paracellular barrier functions of the hemolymph-brain barrier (insect blood-brain barrier) mediated by glial cell septate junctions. Required for maintenance of septate junctions in imaginal disk epithelial cells. Involved in the epithelial cell wound-healing response. Directly or indirectly mediates cell-cell adhesion during septate junction formation. This is UPAR/Ly6 domain-containing protein cold from Drosophila melanogaster (Fruit fly).